We begin with the raw amino-acid sequence, 274 residues long: uncharacterized protein (274 aa).

This is an uncharacterized protein from Rhodobacter capsulatus (Rhodopseudomonas capsulata).